Here is a 230-residue protein sequence, read N- to C-terminus: Large ribosomal subunit protein uL1 (230 aa).

It belongs to the universal ribosomal protein uL1 family. Part of the 50S ribosomal subunit.

Functionally, binds directly to 23S rRNA. The L1 stalk is quite mobile in the ribosome, and is involved in E site tRNA release. Protein L1 is also a translational repressor protein, it controls the translation of the L11 operon by binding to its mRNA. In Ruminiclostridium cellulolyticum (strain ATCC 35319 / DSM 5812 / JCM 6584 / H10) (Clostridium cellulolyticum), this protein is Large ribosomal subunit protein uL1.